A 182-amino-acid polypeptide reads, in one-letter code: Autophagy-related protein 31 (182 aa).

The disordered stretch occupies residues 105–134 (LTSGNDTGGDAGKKSGDISDPAAGPDVPRE).

It is found in the cytoplasm. It localises to the cytoskeleton. The protein resides in the preautophagosomal structure. Its function is as follows. Plays a role in starvation-induced autophagy. Involved in mitophagy. Functions with ATG17 and ATG29 at the preautophagosomal structure (PAS) in order to form normal autophagosomes under starvation conditions. May be involved in microtubule function, such as chromosome segregation and karyogamy. The protein is Autophagy-related protein 31 (CIS1) of Candida glabrata (strain ATCC 2001 / BCRC 20586 / JCM 3761 / NBRC 0622 / NRRL Y-65 / CBS 138) (Yeast).